The following is a 465-amino-acid chain: Uronate isomerase (465 aa).

It belongs to the metallo-dependent hydrolases superfamily. Uronate isomerase family.

The catalysed reaction is D-glucuronate = D-fructuronate. The enzyme catalyses aldehydo-D-galacturonate = keto-D-tagaturonate. It participates in carbohydrate metabolism; pentose and glucuronate interconversion. The polypeptide is Uronate isomerase (Streptococcus equi subsp. zooepidemicus (strain MGCS10565)).